A 363-amino-acid polypeptide reads, in one-letter code: Sensor protein BasS (363 aa).

At 1 to 13 the chain is on the cytoplasmic side; sequence MHFLRRPISLRQR. Residues 14–34 traverse the membrane as a helical segment; sequence LILTIGAILLVFELISVFWLW. Residues 35 to 64 are Periplasmic-facing; it reads HESTEQIQLFEQALRDNRNNDRHIMREIRE. The helical transmembrane segment at 65-88 threads the bilayer; that stretch reads AVASLIVPGVFMVSLTLFICYQAV. The region spanning 89–141 is the HAMP domain; the sequence is RRITRPLAELQKELEARTADNLTPIAIHSATLEIEAVVSALNDLVSRLTSTLD. The Cytoplasmic portion of the chain corresponds to 89 to 363; the sequence is RRITRPLAEL…KKDQYVANQI (275 aa). Residues 149–357 enclose the Histidine kinase domain; the sequence is DVAHELRTPL…RAWVRLKKDQ (209 aa). Histidine 152 carries the post-translational modification Phosphohistidine; by autocatalysis.

Post-translationally, autophosphorylated.

It localises to the cell inner membrane. It carries out the reaction ATP + protein L-histidine = ADP + protein N-phospho-L-histidine.. In terms of biological role, member of the two-component regulatory system BasS/BasR Autophosphorylates and activates BasR by phosphorylation. In Escherichia coli (strain K12), this protein is Sensor protein BasS (basS).